The following is a 635-amino-acid chain: Sodium-dependent multivitamin transporter (635 aa).

The next 3 helical transmembrane spans lie at 24 to 44, 68 to 88, and 101 to 121; these read FSIM…AIGL, CLPV…ILGV, and FLGC…IPVF. Asparagine 138 carries N-linked (GlcNAc...) asparagine glycosylation. 9 consecutive transmembrane segments (helical) span residues 143 to 163, 176 to 196, 199 to 219, 256 to 276, 297 to 317, 336 to 356, 396 to 416, 428 to 448, and 456 to 476; these read VCGT…VLYA, LWLS…LGGL, VIWT…AVII, FWTL…VNQA, VFPF…VMFA, FVLY…GLFI, IMLS…MAYI, ISIF…GMFF, and AVVG…GSIV. N-linked (GlcNAc...) asparagine glycosylation is found at asparagine 489 and asparagine 498. The chain crosses the membrane as a helical span at residues 528 to 548; the sequence is LWYSAHNSTTVIVVGLIVSLL.

The protein belongs to the sodium:solute symporter (SSF) (TC 2.A.21) family. In terms of assembly, interacts with PDZD11. Post-translationally, may be glycosylated. In terms of tissue distribution, expressed in microvessels of the brain (at protein level). Expressed in heart, brain, placenta, lung, liver, skeletal muscle, kidney, and pancreas.

It localises to the cell membrane. The protein localises to the apical cell membrane. It carries out the reaction biotin(out) + 2 Na(+)(out) = biotin(in) + 2 Na(+)(in). The catalysed reaction is (R)-pantothenate(out) + 2 Na(+)(out) = (R)-pantothenate(in) + 2 Na(+)(in). The enzyme catalyses (R)-lipoate(out) + 2 Na(+)(out) = (R)-lipoate(in) + 2 Na(+)(in). It catalyses the reaction iodide(out) + 2 Na(+)(out) = iodide(in) + 2 Na(+)(in). In terms of biological role, sodium-dependent multivitamin transporter that mediates the electrogenic transport of pantothenate, biotin, lipoate and iodide. Functions as a Na(+)-coupled substrate symporter where the stoichiometry of Na(+):substrate is 2:1, creating an electrochemical Na(+) gradient used as driving force for substrate uptake. Required for biotin and pantothenate uptake in the intestine across the brush border membrane. Plays a role in the maintenance of intestinal mucosa integrity, by providing the gut mucosa with biotin. Contributes to the luminal uptake of biotin and pantothenate into the brain across the blood-brain barrier. The sequence is that of Sodium-dependent multivitamin transporter from Homo sapiens (Human).